The chain runs to 1104 residues: Valine--tRNA ligase, mitochondrial (1104 aa).

A mitochondrion-targeting transit peptide spans 1–47 (MNKWLNTLSKTFTFRLLNCHYRRSLPLCQNFSLKKSLTHNQVRFFKM). Phosphoserine is present on Ser73. The interval 99-119 (KKNAAATTGASQKKPKKKKEV) is disordered. A 'HIGH' region motif is present at residues 190 to 200 (PNVTGALHIGH). Residues Ser294 and Ser332 each carry the phosphoserine modification. Positions 703-707 (KMSKS) match the 'KMSKS' region motif. Lys706 is an ATP binding site. Ser707 carries the phosphoserine modification. Residue Thr1003 is modified to Phosphothreonine.

The protein belongs to the class-I aminoacyl-tRNA synthetase family.

It localises to the cytoplasm. Its subcellular location is the mitochondrion. It carries out the reaction tRNA(Val) + L-valine + ATP = L-valyl-tRNA(Val) + AMP + diphosphate. The protein is Valine--tRNA ligase, mitochondrial (VAS1) of Saccharomyces cerevisiae (strain ATCC 204508 / S288c) (Baker's yeast).